We begin with the raw amino-acid sequence, 398 residues long: Acetate kinase (398 aa).

N9 is a binding site for Mg(2+). K16 is an ATP binding site. R93 is a binding site for substrate. The active-site Proton donor/acceptor is D150. ATP contacts are provided by residues 209 to 213, 284 to 286, and 329 to 333; these read HLGAG, DMR, and GIGEH. E382 serves as a coordination point for Mg(2+).

This sequence belongs to the acetokinase family. In terms of assembly, homodimer. Mg(2+) serves as cofactor. Mn(2+) is required as a cofactor.

It localises to the cytoplasm. It carries out the reaction acetate + ATP = acetyl phosphate + ADP. Its pathway is metabolic intermediate biosynthesis; acetyl-CoA biosynthesis; acetyl-CoA from acetate: step 1/2. In terms of biological role, catalyzes the formation of acetyl phosphate from acetate and ATP. Can also catalyze the reverse reaction. The protein is Acetate kinase of Rhodopseudomonas palustris (strain TIE-1).